The following is a 250-amino-acid chain: 1-(5-phosphoribosyl)-5-[(5-phosphoribosylamino)methylideneamino] imidazole-4-carboxamide isomerase (250 aa).

The Proton acceptor role is filled by aspartate 12. Catalysis depends on aspartate 134, which acts as the Proton donor.

This sequence belongs to the HisA/HisF family.

The protein resides in the cytoplasm. It carries out the reaction 1-(5-phospho-beta-D-ribosyl)-5-[(5-phospho-beta-D-ribosylamino)methylideneamino]imidazole-4-carboxamide = 5-[(5-phospho-1-deoxy-D-ribulos-1-ylimino)methylamino]-1-(5-phospho-beta-D-ribosyl)imidazole-4-carboxamide. Its pathway is amino-acid biosynthesis; L-histidine biosynthesis; L-histidine from 5-phospho-alpha-D-ribose 1-diphosphate: step 4/9. The polypeptide is 1-(5-phosphoribosyl)-5-[(5-phosphoribosylamino)methylideneamino] imidazole-4-carboxamide isomerase (Actinobacillus pleuropneumoniae serotype 3 (strain JL03)).